We begin with the raw amino-acid sequence, 328 residues long: Olfactory receptor 4A16 (328 aa).

The Extracellular segment spans residues 1–23; that stretch reads MRPSSNVTEFVLLGLTQDPDVKK. N-linked (GlcNAc...) asparagine glycosylation is present at Asn-6. Residues 24 to 47 traverse the membrane as a helical segment; the sequence is TLFVMFLLIYIVTMVGNLLIWVTT. Residues 48–55 are Cytoplasmic-facing; sequence IGSPSLGS. Residues 56 to 77 traverse the membrane as a helical segment; it reads LMYFFLAYLSLMDAIYSTAMSP. The Extracellular segment spans residues 78–98; sequence KLMIDLLCDKIAISLSACMGQ. Cys-95 and Cys-187 are joined by a disulfide. Residues 99 to 118 traverse the membrane as a helical segment; sequence LFIEHLLGGAEVFLLVVMAY. Residues 119–137 are Cytoplasmic-facing; sequence DRYVAISKPLHYLNIMNRL. A helical transmembrane segment spans residues 138 to 156; the sequence is VCILLLVVAMIGGFVHSVV. The Extracellular segment spans residues 157 to 193; the sequence is QIVFLYSLPICGPNVIDHSVCDMYPLLELLCLDTYFI. The chain crosses the membrane as a helical span at residues 194 to 217; it reads GLTVVANGGIICMVIFTFLLISCG. The Cytoplasmic portion of the chain corresponds to 218–233; sequence VILNFLKTYSQEERHK. Residues 234 to 256 traverse the membrane as a helical segment; sequence ALPTCISHIIVVALVFVPCIFMY. Residues 257 to 267 lie on the Extracellular side of the membrane; it reads VRPVSNFPFDK. Residues 268-287 traverse the membrane as a helical segment; sequence LMTVFYSIITLMLNPLIYSL. Residues 288 to 328 lie on the Cytoplasmic side of the membrane; the sequence is RQSEMKNAMKNLWCEKLSIVRKRVSPTLNIFIPSSKATNRR.

It belongs to the G-protein coupled receptor 1 family.

It localises to the cell membrane. Its function is as follows. Odorant receptor. The polypeptide is Olfactory receptor 4A16 (OR4A16) (Homo sapiens (Human)).